We begin with the raw amino-acid sequence, 700 residues long: Auxin response factor 18 (700 aa).

The segment at residues 128 to 230 (FAKTLTQSDA…DLCVGIRRAK (103 aa)) is a DNA-binding region (TF-B3). Disordered stretches follow at residues 234–254 (VGGPEFLPPPPPPPPTPAAGG) and 560–595 (VKKSSSDGNAENTVNKSNSDVSSPRSNQNGTTDNLS). Residues 239 to 250 (FLPPPPPPPPTP) are compositionally biased toward pro residues. The span at 565-594 (SDGNAENTVNKSNSDVSSPRSNQNGTTDNL) shows a compositional bias: polar residues. The 84-residue stretch at 614–697 (TGHCKVFMQS…NILTDTSGDN (84 aa)) folds into the PB1 domain.

It belongs to the ARF family. In terms of assembly, homodimers and heterodimers. As to expression, expressed in roots, culms, leaves and young panicles.

The protein resides in the nucleus. In terms of biological role, auxin response factors (ARFs) are transcriptional factors that bind specifically to the DNA sequence 5'-TGTCTC-3' found in the auxin-responsive promoter elements (AuxREs). The polypeptide is Auxin response factor 18 (ARF18) (Oryza sativa subsp. japonica (Rice)).